The following is a 295-amino-acid chain: uncharacterized protein (295 aa).

This is an uncharacterized protein from Acanthamoeba polyphaga (Amoeba).